The primary structure comprises 493 residues: Cytochrome P450 2E1 (493 aa).

298 to 303 lines the substrate pocket; that stretch reads FAGTET. Cysteine 437 is a heme binding site.

It belongs to the cytochrome P450 family. In terms of assembly, interacts with chaperones HSP70 and HSP90; this interaction is required for initial targeting to mitochondria. Heme serves as cofactor.

It is found in the endoplasmic reticulum membrane. Its subcellular location is the microsome membrane. The protein resides in the mitochondrion inner membrane. The enzyme catalyses an organic molecule + reduced [NADPH--hemoprotein reductase] + O2 = an alcohol + oxidized [NADPH--hemoprotein reductase] + H2O + H(+). It catalyses the reaction (5Z,8Z,11Z)-eicosatrienoate + reduced [NADPH--hemoprotein reductase] + O2 = 19-hydroxy-(5Z,8Z,11Z)-eicosatrienoate + oxidized [NADPH--hemoprotein reductase] + H2O + H(+). The catalysed reaction is (5Z,8Z,11Z,14Z,17Z)-eicosapentaenoate + reduced [NADPH--hemoprotein reductase] + O2 = 19-hydroxy-(5Z,8Z,11Z,14Z,17Z)-eicosapentaenoate + oxidized [NADPH--hemoprotein reductase] + H2O + H(+). It carries out the reaction (4Z,7Z,10Z,13Z,16Z,19Z)-docosahexaenoate + reduced [NADPH--hemoprotein reductase] + O2 = 21-hydroxy-(4Z,7Z,10Z,13Z,16Z,19Z)-docosahexaenoate + oxidized [NADPH--hemoprotein reductase] + H2O + H(+). The enzyme catalyses dodecanoate + reduced [NADPH--hemoprotein reductase] + O2 = 11-hydroxydodecanoate + oxidized [NADPH--hemoprotein reductase] + H2O + H(+). It catalyses the reaction tetradecanoate + reduced [NADPH--hemoprotein reductase] + O2 = 13-hydroxytetradecanoate + oxidized [NADPH--hemoprotein reductase] + H2O + H(+). The catalysed reaction is 4-nitrophenol + NADPH + O2 + H(+) = 4-nitrocatechol + NADP(+) + H2O. It participates in lipid metabolism; fatty acid metabolism. With respect to regulation, the omega-1 hydroxylase activity is stimulated by cytochrome b5. A cytochrome P450 monooxygenase involved in the metabolism of fatty acids. Mechanistically, uses molecular oxygen inserting one oxygen atom into a substrate, and reducing the second into a water molecule, with two electrons provided by NADPH via cytochrome P450 reductase (NADPH--hemoprotein reductase). Catalyzes the hydroxylation of carbon-hydrogen bonds. Hydroxylates fatty acids specifically at the omega-1 position displaying the highest catalytic activity for saturated fatty acids. May be involved in the oxidative metabolism of xenobiotics. This Rattus norvegicus (Rat) protein is Cytochrome P450 2E1.